A 47-amino-acid chain; its full sequence is Cytochrome b559 subunit beta (47 aa).

A helical transmembrane segment spans residues 23 to 39 (WLAVHALAIPSVFFLGA). H27 lines the heme pocket.

Belongs to the PsbE/PsbF family. As to quaternary structure, heterodimer of an alpha subunit and a beta subunit. PSII is composed of 1 copy each of membrane proteins PsbA, PsbB, PsbC, PsbD, PsbE, PsbF, PsbH, PsbI, PsbJ, PsbK, PsbL, PsbM, PsbT, PsbX, PsbY, Psb30/Ycf12, peripheral proteins PsbO, CyanoQ (PsbQ), PsbU, PsbV and a large number of cofactors. It forms dimeric complexes. The cofactor is heme b.

The protein resides in the cellular thylakoid membrane. In terms of biological role, this b-type cytochrome is tightly associated with the reaction center of photosystem II (PSII). PSII is a light-driven water:plastoquinone oxidoreductase that uses light energy to abstract electrons from H(2)O, generating O(2) and a proton gradient subsequently used for ATP formation. It consists of a core antenna complex that captures photons, and an electron transfer chain that converts photonic excitation into a charge separation. This Prochlorococcus marinus subsp. pastoris (strain CCMP1986 / NIES-2087 / MED4) protein is Cytochrome b559 subunit beta.